The primary structure comprises 122 residues: Large ribosomal subunit protein bL12 (122 aa).

Belongs to the bacterial ribosomal protein bL12 family. Homodimer. Part of the ribosomal stalk of the 50S ribosomal subunit. Forms a multimeric L10(L12)X complex, where L10 forms an elongated spine to which 2 to 4 L12 dimers bind in a sequential fashion. Binds GTP-bound translation factors.

Its function is as follows. Forms part of the ribosomal stalk which helps the ribosome interact with GTP-bound translation factors. Is thus essential for accurate translation. This chain is Large ribosomal subunit protein bL12, found in Mycoplasma genitalium (strain ATCC 33530 / DSM 19775 / NCTC 10195 / G37) (Mycoplasmoides genitalium).